Consider the following 179-residue polypeptide: MASSTQTNVTIAPKTLQQLRQQDAVILVDVREPLEFVGEHITDAYSLPLSRLNPSQLPQAEGKTTVLYCQSSNRSGNALQQLRSAGVEGIIHLEGGLLAWKQAGLPTVKTKNAPISIMRQVQIIAGSLVLTGVLLGSFVAPGFYFLSGFVGAGLLFAGLSGTCMMANLLGKLPYNQIKD.

Residues 21 to 109 form the Rhodanese domain; sequence QQDAVILVDV…WKQAGLPTVK (89 aa). Helical transmembrane passes span 115-135 and 138-158; these read ISIMRQVQIIAGSLVLTGVLL and FVAPGFYFLSGFVGAGLLFAG.

Its subcellular location is the cell membrane. This is an uncharacterized protein from Synechocystis sp. (strain ATCC 27184 / PCC 6803 / Kazusa).